We begin with the raw amino-acid sequence, 426 residues long: Glutamate-1-semialdehyde 2,1-aminomutase (426 aa).

Lys-265 carries the post-translational modification N6-(pyridoxal phosphate)lysine.

This sequence belongs to the class-III pyridoxal-phosphate-dependent aminotransferase family. HemL subfamily. In terms of assembly, homodimer. Pyridoxal 5'-phosphate serves as cofactor.

It is found in the cytoplasm. It carries out the reaction (S)-4-amino-5-oxopentanoate = 5-aminolevulinate. It participates in porphyrin-containing compound metabolism; protoporphyrin-IX biosynthesis; 5-aminolevulinate from L-glutamyl-tRNA(Glu): step 2/2. In Alteromonas mediterranea (strain DSM 17117 / CIP 110805 / LMG 28347 / Deep ecotype), this protein is Glutamate-1-semialdehyde 2,1-aminomutase.